Reading from the N-terminus, the 463-residue chain is Protein MRG3-like (463 aa).

A helical membrane pass occupies residues 54-74 (WVLSTGIVSFIAFNIWWVYWP). 4 TPR repeats span residues 84 to 118 (KILRKGLHSEIKKEGANYQKSLEYYLEALEECKAE), 128 to 161 (TGIEIKIGEMYEKLHMYNDATALYGDMLKKFYNE), 358 to 389 (ELIRSRLQENQNSCLQYSADCYKSIISFANEN), and 409 to 442 (SLAHYGIGVINLHKGRLRASKKELKKAIRISEMI).

It belongs to the MGR3 family.

Its subcellular location is the membrane. In Saccharomyces cerevisiae (strain ATCC 204508 / S288c) (Baker's yeast), this protein is Protein MRG3-like.